A 1071-amino-acid chain; its full sequence is Carbamoyl phosphate synthase large chain (1071 aa).

The segment at 1 to 403 (MPKRTDLKSI…SFQKALRGLE (403 aa)) is carboxyphosphate synthetic domain. 12 residues coordinate ATP: Arg-129, Arg-169, Gly-175, Gly-176, Gln-208, Val-210, Glu-215, Gly-241, Val-242, His-243, Gln-285, and Glu-299. The region spanning 133–328 (KEAMEKIGLS…IAKVAAKLAV (196 aa)) is the ATP-grasp 1 domain. The Mg(2+) site is built by Gln-285, Glu-299, and Asn-301. Mn(2+)-binding residues include Gln-285, Glu-299, and Asn-301. The tract at residues 404–548 (TGLCGFNPRS…YSTYEEECES (145 aa)) is oligomerization domain. The tract at residues 549 to 930 (RPSDRKKVMI…AYYKAQLGAG (382 aa)) is carbamoyl phosphate synthetic domain. Positions 673–864 (QKVLNDLGLR…LAKVGARCMA (192 aa)) constitute an ATP-grasp 2 domain. ATP-binding residues include Arg-709, Phe-748, Leu-750, Glu-755, Gly-780, Ile-781, His-782, Ser-783, Gln-823, and Glu-835. The Mg(2+) site is built by Gln-823, Glu-835, and Asn-837. The Mn(2+) site is built by Gln-823, Glu-835, and Asn-837. In terms of domain architecture, MGS-like spans 931 to 1071 (ERLNPTGKIF…ELHGRLKNRN (141 aa)). The interval 931–1071 (ERLNPTGKIF…ELHGRLKNRN (141 aa)) is allosteric domain.

The protein belongs to the CarB family. As to quaternary structure, composed of two chains; the small (or glutamine) chain promotes the hydrolysis of glutamine to ammonia, which is used by the large (or ammonia) chain to synthesize carbamoyl phosphate. Tetramer of heterodimers (alpha,beta)4. The cofactor is Mg(2+). Mn(2+) serves as cofactor.

The catalysed reaction is hydrogencarbonate + L-glutamine + 2 ATP + H2O = carbamoyl phosphate + L-glutamate + 2 ADP + phosphate + 2 H(+). It carries out the reaction hydrogencarbonate + NH4(+) + 2 ATP = carbamoyl phosphate + 2 ADP + phosphate + 2 H(+). Its pathway is amino-acid biosynthesis; L-arginine biosynthesis; carbamoyl phosphate from bicarbonate: step 1/1. It functions in the pathway pyrimidine metabolism; UMP biosynthesis via de novo pathway; (S)-dihydroorotate from bicarbonate: step 1/3. Large subunit of the glutamine-dependent carbamoyl phosphate synthetase (CPSase). CPSase catalyzes the formation of carbamoyl phosphate from the ammonia moiety of glutamine, carbonate, and phosphate donated by ATP, constituting the first step of 2 biosynthetic pathways, one leading to arginine and/or urea and the other to pyrimidine nucleotides. The large subunit (synthetase) binds the substrates ammonia (free or transferred from glutamine from the small subunit), hydrogencarbonate and ATP and carries out an ATP-coupled ligase reaction, activating hydrogencarbonate by forming carboxy phosphate which reacts with ammonia to form carbamoyl phosphate. This chain is Carbamoyl phosphate synthase large chain, found in Neisseria meningitidis serogroup B (strain ATCC BAA-335 / MC58).